Reading from the N-terminus, the 201-residue chain is ADP-ribosylation factor-related protein 1 (201 aa).

Position 1 is an N-acetylmethionine (M1). GTP is bound by residues 24 to 31, 75 to 79, and 134 to 137; these read GLDNAGKT, DLGGQ, and NKQD.

It belongs to the small GTPase superfamily. Arf family. Interacts with SYS1.

It is found in the golgi apparatus. Its subcellular location is the trans-Golgi network. Trans-Golgi-associated GTPase that regulates protein sorting. Controls the targeting of ARL1 and its effector to the trans-Golgi. Required for the lipidation of chylomicrons in the intestine and required for VLDL lipidation in the liver. The polypeptide is ADP-ribosylation factor-related protein 1 (ARFRP1) (Bos taurus (Bovine)).